We begin with the raw amino-acid sequence, 59 residues long: Single-pass membrane and coiled-coil domain-containing protein 4 (59 aa).

The disordered stretch occupies residues Met1–Met23. Residues Lys9–Ala22 are compositionally biased toward basic and acidic residues. Positions Lys9–Thr31 form a coiled coil. A helical transmembrane segment spans residues Thr32–Ala52.

This sequence belongs to the SMCO4 family.

It localises to the membrane. This Xenopus laevis (African clawed frog) protein is Single-pass membrane and coiled-coil domain-containing protein 4 (smco4).